The sequence spans 50 residues: Sperm protamine P1 (50 aa).

It belongs to the protamine P1 family. As to quaternary structure, cross-linked by interchain disulfide bonds around the DNA-helix. In terms of tissue distribution, testis.

It is found in the nucleus. Its subcellular location is the chromosome. Functionally, protamines substitute for histones in the chromatin of sperm during the haploid phase of spermatogenesis. They compact sperm DNA into a highly condensed, stable and inactive complex. The protein is Sperm protamine P1 (PRM1) of Saimiri sciureus (Common squirrel monkey).